We begin with the raw amino-acid sequence, 242 residues long: MILLKLYLTLAAILCQSRGMTSLDLDDLMTTNPEIQNEIINKHNDLRRTVDPPAKNMLKMSWDNIIAESAKRAALRCNYKEHTSIAERTIGGVVCGENHFMSSNPRTWSSSIQSWFDERNSFMFGFGPTIPGVMVGHYTQVVWYKSYKVGCAINLCPAQSLKYFQVCQYCPGGNVAGRKYEPYTIGEPCAACPKDCDNGLCTNPCAYNDDYTSCPDLTKQVGCNHPVTANCKASCQCTTEIQ.

The first 19 residues, 1–19 (MILLKLYLTLAAILCQSRG), serve as a signal peptide directing secretion. Residues 41–169 (NKHNDLRRTV…SLKYFQVCQY (129 aa)) form the SCP domain. Cystine bridges form between C77–C156, C95–C170, C151–C167, C189–C196, C192–C201, C205–C237, C214–C231, and C223–C235. The ShKT domain occupies 205–237 (CAYNDDYTSCPDLTKQVGCNHPVTANCKASCQC).

The protein belongs to the CRISP family. In terms of tissue distribution, expressed by the venom gland.

The protein localises to the secreted. In terms of biological role, blocks ryanodine receptors, and potassium channels. The chain is Cysteine-rich venom protein VAR11 from Varanus varius (Lace monitor lizard).